We begin with the raw amino-acid sequence, 258 residues long: Deoxyribose-phosphate aldolase (258 aa).

Aspartate 101 functions as the Proton donor/acceptor in the catalytic mechanism. The Schiff-base intermediate with acetaldehyde role is filled by lysine 166. The active-site Proton donor/acceptor is the lysine 200.

The protein belongs to the DeoC/FbaB aldolase family. DeoC type 2 subfamily.

Its subcellular location is the cytoplasm. It catalyses the reaction 2-deoxy-D-ribose 5-phosphate = D-glyceraldehyde 3-phosphate + acetaldehyde. It participates in carbohydrate degradation; 2-deoxy-D-ribose 1-phosphate degradation; D-glyceraldehyde 3-phosphate and acetaldehyde from 2-deoxy-alpha-D-ribose 1-phosphate: step 2/2. Its function is as follows. Catalyzes a reversible aldol reaction between acetaldehyde and D-glyceraldehyde 3-phosphate to generate 2-deoxy-D-ribose 5-phosphate. The polypeptide is Deoxyribose-phosphate aldolase (Actinobacillus pleuropneumoniae serotype 7 (strain AP76)).